A 715-amino-acid chain; its full sequence is Metastasis-associated protein MTA1 (715 aa).

The BAH domain maps to 1-164 (MAANMYRVGD…PQQKTLLADK (164 aa)). The region spanning 165–276 (GEIRVGNRYQ…KAISALVPQG (112 aa)) is the ELM2 domain. A Glycyl lysine isopeptide (Lys-Gly) (interchain with G-Cter in ubiquitin) cross-link involves residue K182. The 53-residue stretch at 283–335 (DEMEEWSASEANLFEEALEKYGKDFTDIQQDFLPWKSLTSIIEYYYMWKTTDR) folds into the SANT domain. Residue S386 is modified to Phosphoserine. The GATA-type; atypical zinc finger occupies 393 to 420 (CESCYTTQSYQWYSWGPPNMQCRLCASC). The interval 437-460 (DGERPGPNRNNMSPHGIPARSSGS) is disordered. S449 is modified (phosphoserine). A Glycyl lysine isopeptide (Lys-Gly) (interchain with G-Cter in SUMO2 and SUMO3) cross-link involves residue K509. At S522 the chain carries Phosphoserine. Residues 542–552 (ETHPRPPKPDP) show a composition bias toward basic and acidic residues. Positions 542–590 (ETHPRPPKPDPVKSSSSVLSSLTPAKSAPVINNGSPTILGKRSYEQHNG) are disordered. The SH3-binding motif lies at 545–552 (PRPPKPDP). Residue K549 forms a Glycyl lysine isopeptide (Lys-Gly) (interchain with G-Cter in SUMO2) linkage. Positions 553-565 (VKSSSSVLSSLTP) are enriched in low complexity. Phosphothreonine is present on T564. S576 carries the phosphoserine modification. At T578 the chain carries Phosphothreonine. K626 bears the N6-acetyllysine; alternate mark. K626 is covalently cross-linked (Glycyl lysine isopeptide (Lys-Gly) (interchain with G-Cter in ubiquitin); alternate). A Phosphoserine modification is found at S639. The interaction with RBBP4 stretch occupies residues 656–686 (DVFYMATEETRKIRKLLSSSETKRAARRPYK). Residues 673–715 (SSSETKRAARRPYKPIALRQSQALPLRPPPPAPVNDEPIVIED) are disordered. The SH3-binding motif lies at 696–705 (LPLRPPPPAP). Positions 711–715 (IVIED) match the SUMO interaction motif 1 (SIM); crucial for efficient sumoylation motif.

Belongs to the metastasis-associated protein family. As to quaternary structure, component of the nucleosome remodeling and deacetylase (NuRD) repressor complex, composed of core proteins MTA1, MTA2, MTA3, RBBP4, RBBP7, HDAC1, HDAC2, MBD2, MBD3, and peripherally associated proteins CDK2AP1, CDK2AP2, GATAD2A, GATAD2B, CHD3, CHD4 and CHD5. The exact stoichiometry of the NuRD complex is unknown, and some subunits such as MBD2 and MBD3, GATAD2A and GATAD2B, and CHD3, CHD4 and CHD5 define mutually exclusive NuRD complexes. Interacts with RBBP4; the interaction is direct. Interacts with BMAL1. Interacts with CLOCK. Interacts with COP1. Interacts with CSNK1G2 in the cytoplasm. Interacts with EP300. Interacts with HDAC2. Interacts with ITGB3BP/CENPR. Interacts with MBD3L2. Interacts with MDM2. Interacts with NACC2. Interacts with p53/TP53. Interacts with PIAS1. Interacts with PIAS3. Interacts with PIAS4. Interacts with PWWP2A. Interacts with PWWP2B. Interacts with SENP1. Interacts with SENP2. Interacts with SIX3; facilitates the binding of SIX3 to the core DNA motif of SIX3 promoter. Interacts with SUMO1. Interacts with SUMO2. Interacts with TFCP2L1; which is indispensable for TFCP2L1-mediated self-renewal-promoting effect and endoderm-inhibiting action. Interacts with TFAP2C. Interacts with TPR. Interacts with UBE2I/UBC9. Phosphorylation by CSNK1G2/CK1 triggered by estrogen enhances corepression of estrogen receptor (ER). Post-translationally, acetylation is essential for its transcriptional coactivator activity. In terms of processing, sumoylation positively regulates its transcriptional corepressor activity but does not affect the protein stability. Sumoylated preferentially by SUMO2 or SUMO3 than SUMO1. Sumoylation is enhanced by PIAS1/3/4 and preferentially sumoylated by SUMO2 in the presence of PIAS1/3/4. Desumoylated by SENP1. Ubiquitinated by COP1, which leads to proteasomal degradation. In terms of tissue distribution, widely expressed but not in skeletal muscle. Highly expressed in the brain, liver, kidney and cardiac muscle and in mammary tumors.

Its subcellular location is the nucleus. It is found in the nucleus envelope. It localises to the cytoplasm. The protein localises to the cytoskeleton. Its function is as follows. Transcriptional coregulator which can act as both a transcriptional corepressor and coactivator. Acts as a component of the histone deacetylase NuRD complex which participates in the remodeling of chromatin. In the NuRD complex, regulates transcription of its targets by modifying the acetylation status of the target chromatin and cofactor accessibility to the target DNA. In conjunction with other components of NuRD, acts as a transcriptional corepressor of BRCA1, ESR1, TFF1 and CDKN1A. Acts as a transcriptional coactivator of BCAS3, PAX5 and SUMO2, independent of the NuRD complex. Stimulates the expression of WNT1 by inhibiting the expression of its transcriptional corepressor SIX3. Regulates p53-dependent and -independent DNA repair processes following genotoxic stress. Regulates the stability and function of p53/TP53 by inhibiting its ubiquitination by COP1 and MDM2 thereby regulating the p53-dependent DNA repair. Plays a role in the regulation of the circadian clock and is essential for the generation and maintenance of circadian rhythms under constant light and for normal entrainment of behavior to light-dark (LD) cycles. Positively regulates the CLOCK-BMAL1 heterodimer mediated transcriptional activation of its own transcription and the transcription of CRY1. Regulates deacetylation of BMAL1 by regulating SIRT1 expression, resulting in derepressing CRY1-mediated transcription repression. With Tfcp2l1, promotes establishment and maintenance of pluripotency in embryonic stem cells (ESCs) and inhibits endoderm differentiation. The chain is Metastasis-associated protein MTA1 (Mta1) from Mus musculus (Mouse).